Here is a 316-residue protein sequence, read N- to C-terminus: 4-diphosphocytidyl-2-C-methyl-D-erythritol kinase (316 aa).

K14 is an active-site residue. 96 to 106 (PMGAGLGGGSS) lines the ATP pocket. Residue D138 is part of the active site.

It belongs to the GHMP kinase family. IspE subfamily.

It carries out the reaction 4-CDP-2-C-methyl-D-erythritol + ATP = 4-CDP-2-C-methyl-D-erythritol 2-phosphate + ADP + H(+). Its pathway is isoprenoid biosynthesis; isopentenyl diphosphate biosynthesis via DXP pathway; isopentenyl diphosphate from 1-deoxy-D-xylulose 5-phosphate: step 3/6. Functionally, catalyzes the phosphorylation of the position 2 hydroxy group of 4-diphosphocytidyl-2C-methyl-D-erythritol. The chain is 4-diphosphocytidyl-2-C-methyl-D-erythritol kinase from Solibacter usitatus (strain Ellin6076).